The following is a 189-amino-acid chain: Interferon alpha-7 (189 aa).

A signal peptide spans 1–23 (MARSFSLLMVVLVLSYKSICSLG). 2 cysteine pairs are disulfide-bonded: Cys-24-Cys-122 and Cys-52-Cys-162.

Belongs to the alpha/beta interferon family.

It is found in the secreted. In terms of biological role, produced by macrophages, IFN-alpha have antiviral activities. Interferon stimulates the production of two enzymes: a protein kinase and an oligoadenylate synthetase. The sequence is that of Interferon alpha-7 (IFNA7) from Homo sapiens (Human).